Reading from the N-terminus, the 512-residue chain is Glycine betaine transporter OpuD (512 aa).

12 helical membrane-spanning segments follow: residues Ile5–Ile25, Phe45–Phe65, Phe82–Phe102, Phe135–Tyr155, Ile186–Ala206, Ala222–Trp242, Met257–Met277, Trp312–Ala332, Phe343–Gly363, Leu395–Ala415, Trp441–Leu461, and Thr464–Tyr484.

Belongs to the BCCT transporter (TC 2.A.15) family.

It localises to the cell membrane. Activity is stimulated by high osmolarity. Its function is as follows. High-affinity uptake of glycine betaine. Does not mediate either carnitine or choline uptake. In Bacillus subtilis (strain 168), this protein is Glycine betaine transporter OpuD (opuD).